The chain runs to 496 residues: MKIVMENIHKSFGSNNVLEGVDFSLEPGEIHALMGENGAGKSTLMNILTGLFPSNQGSITIDGVKTQYKDSKESEQAGIAFIRQELNILPQMTVLENLFIGKEMTNSFGFLREKVMKEKAEEVFSRLDFSIPFDKEAGECSVGEQQLIEIAKALMLDAKIIIMDEPTAALTDREIDKLFEIMKELTQQGVALVYISHRMEEIFAICDRITVMRDGISVKTSWIKDTNYNEIVKQMVGRELDERYPERTPTFGKPVLQVNNFSRKGYFNDIKFSVREGEILGVSGLMGAGRTEIMRAIFGIDEVDQGEILLDGKKLTIKDPTDAMKAGLAFITENRKDEGLVLDFSIRENIGLSNLNSFSNKGFIKGKDEKDFVELMIKRLQIKTQTQELPVGNLSGGNQQKVVIAKWVGTSPRVLIMDEPTRGIDVGAKREIYQLMNELTERGLAIIMISSDLPEVLGMSDRIMVIHEGEISGELVREEATQEKIMTYATGGNGHE.

ABC transporter domains follow at residues 3-239 and 246-493; these read IVME…VGRE and ERTP…TGGN. Residue 35-42 coordinates ATP; it reads GENGAGKS.

This sequence belongs to the ABC transporter superfamily. Ribose importer (TC 3.A.1.2.1) family. As to quaternary structure, the complex is composed of an ATP-binding protein (RbsA), two transmembrane proteins (RbsC) and a solute-binding protein (RbsB).

The protein localises to the cell membrane. It catalyses the reaction D-ribose(out) + ATP + H2O = D-ribose(in) + ADP + phosphate + H(+). Its function is as follows. Part of the ABC transporter complex RbsABC involved in ribose import. Responsible for energy coupling to the transport system. The protein is Ribose import ATP-binding protein RbsA of Oceanobacillus iheyensis (strain DSM 14371 / CIP 107618 / JCM 11309 / KCTC 3954 / HTE831).